Consider the following 432-residue polypeptide: Enolase (432 aa).

Residue Gln163 participates in (2R)-2-phosphoglycerate binding. Glu205 acts as the Proton donor in catalysis. Residues Asp242, Glu285, and Asp312 each contribute to the Mg(2+) site. 4 residues coordinate (2R)-2-phosphoglycerate: Lys337, Arg366, Ser367, and Lys388. Residue Lys337 is the Proton acceptor of the active site.

This sequence belongs to the enolase family. Requires Mg(2+) as cofactor.

Its subcellular location is the cytoplasm. It is found in the secreted. The protein localises to the cell surface. The catalysed reaction is (2R)-2-phosphoglycerate = phosphoenolpyruvate + H2O. It participates in carbohydrate degradation; glycolysis; pyruvate from D-glyceraldehyde 3-phosphate: step 4/5. Functionally, catalyzes the reversible conversion of 2-phosphoglycerate (2-PG) into phosphoenolpyruvate (PEP). It is essential for the degradation of carbohydrates via glycolysis. The protein is Enolase of Desulfovibrio desulfuricans (strain ATCC 27774 / DSM 6949 / MB).